The primary structure comprises 135 residues: MSLIQEFKAFAARGNVIDMAVGIIIGAAFGKIVSSFVGDVIMPPIGLILGGVDFSDLAVTLKAAEGATPAVVIAYGKFIQTIIDFLIISFAIFMGLKAINTLKKKQEEAAAPAGPTKDQELLSEIRDLLKSQQGK.

A run of 2 helical transmembrane segments spans residues A9–F29 and I79–I99.

The protein belongs to the MscL family. In terms of assembly, homopentamer.

It is found in the cell inner membrane. Channel that opens in response to stretch forces in the membrane lipid bilayer. May participate in the regulation of osmotic pressure changes within the cell. The polypeptide is Large-conductance mechanosensitive channel (Aeromonas salmonicida (strain A449)).